Reading from the N-terminus, the 247-residue chain is Carboxy-S-adenosyl-L-methionine synthase (247 aa).

S-adenosyl-L-methionine is bound by residues Y39, 64–66 (GCS), 89–90 (DN), 117–118 (DI), N132, and R199.

It belongs to the class I-like SAM-binding methyltransferase superfamily. Cx-SAM synthase family. In terms of assembly, homodimer.

It carries out the reaction prephenate + S-adenosyl-L-methionine = carboxy-S-adenosyl-L-methionine + 3-phenylpyruvate + H2O. Its function is as follows. Catalyzes the conversion of S-adenosyl-L-methionine (SAM) to carboxy-S-adenosyl-L-methionine (Cx-SAM). The chain is Carboxy-S-adenosyl-L-methionine synthase from Escherichia coli (strain K12 / MC4100 / BW2952).